The following is a 291-amino-acid chain: Syntaxin-1A homolog (291 aa).

The interval M1–M24 is disordered. Residues M1–K266 lie on the Cytoplasmic side of the membrane. The stretch at N69–L95 forms a coiled coil. The t-SNARE coiled-coil homology domain maps to L193–A255. A helical; Anchor for type IV membrane protein membrane pass occupies residues I267–Y287. The Extracellular segment spans residues A288–L291.

The protein belongs to the syntaxin family. Interacts (via N-terminus, in open or in closed conformation) with unc-18; the interaction is direct. Interaction in open conformation with unc-18 promotes synaptic vesicle docking and tethering. Interaction via N-terminus with unc-18 mediates the secretion of the neurotransmitter acetylcholine from cholinergic motor neurons. Interaction with unc-18 is reduced in the presence of unc-13. In terms of tissue distribution, expressed throughout the head ganglion, nerve ring, ventral cord, dorsal cord, intestine, vulva and spermatheca.

It localises to the cell membrane. The protein localises to the cell projection. Its subcellular location is the axon. The protein resides in the dendrite. It is found in the perikaryon. Its function is as follows. Plays a critical role in several secretory processes, including cuticle secretion and neurotransmitter release, and probably assists in neuronal membrane maturation or the final stages of neuronal differentiation. Plays a role in synaptic vesicle docking and tethering through its association with unc-18. Through binding to unc-18 mediates the release of the neurotransmitter acetylcholine from cholinergic motor neurons, and thereby promotes locomotory behaviors. Essential for embryonic viability and development. Has a role in dauer formation and adult life span. Required for locomotion. Probably by regulating neuronal transmission downstream of lin-3 and receptor lin-23 and phospholipase plc-3 and upstream of innexin unc-7 and egl-4/PKG in ALA neurons, involved in the decrease in pharyngeal pumping during the quiescent state that precedes each larval molt. In Caenorhabditis elegans, this protein is Syntaxin-1A homolog.